A 402-amino-acid polypeptide reads, in one-letter code: Phosphoglycerate kinase (402 aa).

Substrate-binding positions include 24–26 (DFN), arginine 40, 63–66 (HFGR), arginine 122, and arginine 155. ATP contacts are provided by residues lysine 206, glycine 297, glutamate 328, and 357 to 360 (GGDS).

It belongs to the phosphoglycerate kinase family. Monomer.

It is found in the cytoplasm. The catalysed reaction is (2R)-3-phosphoglycerate + ATP = (2R)-3-phospho-glyceroyl phosphate + ADP. It participates in carbohydrate degradation; glycolysis; pyruvate from D-glyceraldehyde 3-phosphate: step 2/5. The protein is Phosphoglycerate kinase of Prochlorococcus marinus (strain MIT 9211).